The sequence spans 585 residues: Packaging protein UL32 (585 aa).

The segment at 1–25 (MDRVESEEPMDGFESPVFSENTSSN) is disordered. Cys107, Cys110, His187, Cys193, Cys408, Cys411, His484, and Cys491 together coordinate Zn(2+). Zinc finger stretches follow at residues 107 to 193 (CLVC…LHVC) and 408 to 491 (CMLC…DLLC).

This sequence belongs to the herpesviridae UL32 protein family.

It localises to the host cytoplasm. It is found in the host nucleus. In terms of biological role, plays a role in efficient localization of neo-synthesized capsids to nuclear replication compartments, thereby controlling cleavage and packaging of virus genomic DNA. This chain is Packaging protein UL32 (26), found in Varicella-zoster virus (strain Dumas) (HHV-3).